A 154-amino-acid polypeptide reads, in one-letter code: Large ribosomal subunit protein uL30 (154 aa).

Positions 122–141 are disordered; sequence RGGHDGIKTPASDGGQLGKH.

Belongs to the universal ribosomal protein uL30 family. As to quaternary structure, part of the 50S ribosomal subunit.

The chain is Large ribosomal subunit protein uL30 from Halobacterium salinarum (strain ATCC 29341 / DSM 671 / R1).